Reading from the N-terminus, the 398-residue chain is Probable sugar efflux transporter (398 aa).

Transmembrane regions (helical) follow at residues 15–35, 50–70, 81–101, 103–123, 136–156, 169–189, 209–229, 246–266, 275–295, 301–321, 333–353, and 364–384; these read VVTLAIAAFIFNTTEFVPVGL, VGIMLTIYAWVVALMSLPFML, LIGLFVLFIASHVLSFLAWNF, VLVISRIGIAFAHAIFWSITA, AQALSLLATGTALAMVLGLPI, TFFAIGLGALITLLCLIKLLP, PALMSIYLLTVVVVTAHYTAY, FATVLLLILGGAGIIGSVLFG, LLVSSAIGLLLACLLLLMPAA, LAILSIFWGVAIMIIGLGMQV, VAMSLFSGIFNIGIGAGALVG, and AIGYLGAIPALAALIWSILIF.

The protein belongs to the major facilitator superfamily. SotB (TC 2.A.1.2) family.

The protein localises to the cell inner membrane. In terms of biological role, involved in the efflux of sugars. The physiological role may be the reduction of the intracellular concentration of toxic sugars or sugar metabolites. The polypeptide is Probable sugar efflux transporter (Enterobacter sp. (strain 638)).